The chain runs to 329 residues: UDP-glucose 4-epimerase (329 aa).

Residues Tyr-11–Val-12, Asp-31–Gly-36, Asp-51–Val-52, Phe-71–Ser-75, Thr-115, Tyr-139, Lys-143, and Phe-167 each bind NAD(+). 2 residues coordinate substrate: Thr-115 and Tyr-139. Tyr-139 functions as the Proton acceptor in the catalytic mechanism. Substrate-binding positions include Asn-168, His-185 to Leu-186, Phe-202 to Phe-204, Arg-217, and Arg-277 to Asp-280.

Belongs to the NAD(P)-dependent epimerase/dehydratase family. Homodimer. NAD(+) is required as a cofactor.

It carries out the reaction UDP-alpha-D-glucose = UDP-alpha-D-galactose. It functions in the pathway carbohydrate metabolism; galactose metabolism. In terms of biological role, involved in the metabolism of galactose. Catalyzes the conversion of UDP-galactose (UDP-Gal) to UDP-glucose (UDP-Glc) through a mechanism involving the transient reduction of NAD. The protein is UDP-glucose 4-epimerase (galE) of Corynebacterium glutamicum (strain ATCC 13032 / DSM 20300 / JCM 1318 / BCRC 11384 / CCUG 27702 / LMG 3730 / NBRC 12168 / NCIMB 10025 / NRRL B-2784 / 534).